Reading from the N-terminus, the 136-residue chain is Evasin P991 (136 aa).

Residues 1 to 28 (MHSTIVYACLLALAVFVALHGTPLAALA) form the signal peptide. N-linked (GlcNAc...) asparagine glycosylation is found at asparagine 41, asparagine 61, asparagine 64, asparagine 78, asparagine 92, asparagine 100, and asparagine 122. Intrachain disulfides connect cysteine 55-cysteine 77, cysteine 73-cysteine 114, cysteine 90-cysteine 119, and cysteine 109-cysteine 128.

The protein resides in the secreted. Functionally, salivary chemokine-binding protein which has chemokine-neutralizing activity and binds to host chemokines CCL2, CCL3, CCL3L1, CCL4, CCL4L1, CCL5, CCL6, CCL7, CCL8, CCL9, CCL11, CCL12, CCL13, CCL14, CCL16, CCL17, CCL18, CCL19, CCL22, CCL23, CCL24 and CCL27. The polypeptide is Evasin P991 (Amblyomma cajennense (Cayenne tick)).